Reading from the N-terminus, the 123-residue chain is Galanin peptides (123 aa).

Residues 1–19 form the signal peptide; it reads MPRGCALLLASLLLASALS. The propeptide occupies 20–30; the sequence is ATLGLGSPVKE. Ala61 carries the alanine amide modification. Phosphoserine occurs at positions 116 and 117.

Belongs to the galanin family.

The protein resides in the secreted. In terms of biological role, endocrine hormone of the central and peripheral nervous systems that binds and activates the G protein-coupled receptors GALR1, GALR2, and GALR3. This small neuropeptide may regulate diverse physiologic functions including contraction of smooth muscle of the gastrointestinal and genitourinary tract, growth hormone and insulin release and adrenal secretion. The sequence is that of Galanin peptides (GAL) from Sus scrofa (Pig).